Here is a 308-residue protein sequence, read N- to C-terminus: Cytochrome c biogenesis protein CcsA (308 aa).

The next 7 helical transmembrane spans lie at 2-22 (IVST…SILI), 44-64 (GMLV…IYLG), 71-91 (LSES…IAYF), 143-163 (MILG…LMVI), 212-232 (VIGL…VWAN), 239-259 (WSWD…AIYL), and 273-293 (AIVA…VNLV).

The protein belongs to the CcmF/CycK/Ccl1/NrfE/CcsA family. In terms of assembly, may interact with Ccs1.

The protein resides in the plastid membrane. Its function is as follows. Required during biogenesis of c-type cytochromes (cytochrome c6 and cytochrome f) at the step of heme attachment. The protein is Cytochrome c biogenesis protein CcsA of Cuscuta exaltata (Tall dodder).